Consider the following 379-residue polypeptide: Glucose-1-phosphate adenylyltransferase (379 aa).

Alpha-D-glucose 1-phosphate is bound by residues G164, 179 to 180 (EK), and S190.

Belongs to the bacterial/plant glucose-1-phosphate adenylyltransferase family. Homotetramer.

It catalyses the reaction alpha-D-glucose 1-phosphate + ATP + H(+) = ADP-alpha-D-glucose + diphosphate. It participates in glycan biosynthesis; glycogen biosynthesis. Functionally, involved in the biosynthesis of ADP-glucose, a building block required for the elongation reactions to produce glycogen. Catalyzes the reaction between ATP and alpha-D-glucose 1-phosphate (G1P) to produce pyrophosphate and ADP-Glc. In Streptococcus uberis (strain ATCC BAA-854 / 0140J), this protein is Glucose-1-phosphate adenylyltransferase.